The following is a 270-amino-acid chain: Zinc transporter ZupT (270 aa).

8 helical membrane passes run 8–28 (ILVV…GGFI), 40–60 (LTFA…VELL), 78–98 (WIAI…DYLV), 131–151 (ILFA…TFAA), 162–182 (IALA…VPLY), 192–212 (LFYS…AMFF), 216–236 (FLTP…MVFI), and 250–270 (HHHI…IVLI). Positions 141 and 144 each coordinate Fe(2+). The Zn(2+) site is built by Glu-144 and His-169. Positions 170, 173, and 202 each coordinate Fe(2+). Residue Glu-173 participates in Zn(2+) binding.

This sequence belongs to the ZIP transporter (TC 2.A.5) family. ZupT subfamily.

The protein localises to the cell membrane. The catalysed reaction is Zn(2+)(in) = Zn(2+)(out). Its function is as follows. Mediates zinc uptake. May also transport other divalent cations. In Akkermansia muciniphila (strain ATCC BAA-835 / DSM 22959 / JCM 33894 / BCRC 81048 / CCUG 64013 / CIP 107961 / Muc), this protein is Zinc transporter ZupT.